We begin with the raw amino-acid sequence, 451 residues long: Midnolin-B (451 aa).

The 75-residue stretch at 20-94 (MNLNIQSTTG…LTLLPSVEAG (75 aa)) folds into the Ubiquitin-like domain. Disordered stretches follow at residues 187–254 (ASCT…RSRK), 331–372 (RNAK…QTEN), and 388–427 (QKRL…EGSL). 3 stretches are compositionally biased toward low complexity: residues 190–205 (TPGS…TSST), 237–250 (STRG…SPSS), and 336–347 (TSPQSTGPQQTT). Residues 363-372 (SGDRLRQTEN) are compositionally biased toward basic and acidic residues. The segment covering 388–397 (QKRLRRKARR) has biased composition (basic residues). The span at 413–426 (RTSSNSSTSSGEGS) shows a compositional bias: low complexity.

It is found in the nucleus. The protein localises to the cytoplasm. It localises to the cytosol. Its subcellular location is the nucleolus. Functionally, facilitates ubiquitin-independent proteasomal degradation of polycomb protein CBX4. Plays a role in inhibiting the activity of glucokinase GCK and both glucose-induced and basal insulin secretion. The sequence is that of Midnolin-B (midn-b) from Xenopus laevis (African clawed frog).